The chain runs to 561 residues: Putative transport protein KPK_3686 (561 aa).

Helical transmembrane passes span 8 to 28 (LLNG…LCLG), 37 to 57 (LGNS…HFAI), 66 to 86 (FMLF…SIFF), 94 to 114 (MLAL…GKVF), and 158 to 178 (HLSL…IVGA). RCK C-terminal domains follow at residues 202–288 (LDTD…SFRN) and 292–373 (VFDR…RIGF). 5 consecutive transmembrane segments (helical) span residues 383–403 (LLAF…TFQF), 406–426 (FSFG…LGFL), 447–467 (FGLM…INNG), 478–498 (AGLI…AYVL), and 540–560 (AIAN…WPGL).

The protein belongs to the AAE transporter (TC 2.A.81) family. YbjL subfamily.

It localises to the cell membrane. In Klebsiella pneumoniae (strain 342), this protein is Putative transport protein KPK_3686.